We begin with the raw amino-acid sequence, 490 residues long: Ketol-acid reductoisomerase (NADP(+)) (490 aa).

One can recognise a KARI N-terminal Rossmann domain in the interval 18–208; sequence AKCRFMDSSE…GGHKAGVLMS (191 aa). NADP(+)-binding positions include 45 to 48, Arg68, Arg76, Ser78, and 108 to 110; these read CGAQ and DKQ. The active site involves His132. Gly158 serves as a coordination point for NADP(+). 2 consecutive KARI C-terminal knotted domains span residues 209–344 and 345–486; these read SFIA…KTPA and GDVE…MADM. Mg(2+) is bound by residues Asp217, Glu221, Glu389, and Glu393. Ser414 is a binding site for substrate.

It belongs to the ketol-acid reductoisomerase family. It depends on Mg(2+) as a cofactor.

It catalyses the reaction (2R)-2,3-dihydroxy-3-methylbutanoate + NADP(+) = (2S)-2-acetolactate + NADPH + H(+). The catalysed reaction is (2R,3R)-2,3-dihydroxy-3-methylpentanoate + NADP(+) = (S)-2-ethyl-2-hydroxy-3-oxobutanoate + NADPH + H(+). It functions in the pathway amino-acid biosynthesis; L-isoleucine biosynthesis; L-isoleucine from 2-oxobutanoate: step 2/4. It participates in amino-acid biosynthesis; L-valine biosynthesis; L-valine from pyruvate: step 2/4. Functionally, involved in the biosynthesis of branched-chain amino acids (BCAA). Catalyzes an alkyl-migration followed by a ketol-acid reduction of (S)-2-acetolactate (S2AL) to yield (R)-2,3-dihydroxy-isovalerate. In the isomerase reaction, S2AL is rearranged via a Mg-dependent methyl migration to produce 3-hydroxy-3-methyl-2-ketobutyrate (HMKB). In the reductase reaction, this 2-ketoacid undergoes a metal-dependent reduction by NADPH to yield (R)-2,3-dihydroxy-isovalerate. This chain is Ketol-acid reductoisomerase (NADP(+)), found in Marinomonas sp. (strain MWYL1).